Here is a 347-residue protein sequence, read N- to C-terminus: NADH-ubiquinone oxidoreductase chain 2 (347 aa).

10 helical membrane-spanning segments follow: residues 13 to 33, 59 to 79, 84 to 104, 111 to 131, 149 to 169, 178 to 198, 201 to 221, 240 to 260, 276 to 296, and 326 to 346; these read IILG…WIGF, YFLI…INLL, WAVS…ALAM, FHFW…LILL, IDPT…GWGG, IMAY…IYNP, TILN…LLII, IAII…LTGF, IALS…YTRL, and LSPL…MSAL.

It belongs to the complex I subunit 2 family. As to quaternary structure, core subunit of respiratory chain NADH dehydrogenase (Complex I) which is composed of 45 different subunits. Interacts with TMEM242.

The protein localises to the mitochondrion inner membrane. It carries out the reaction a ubiquinone + NADH + 5 H(+)(in) = a ubiquinol + NAD(+) + 4 H(+)(out). Core subunit of the mitochondrial membrane respiratory chain NADH dehydrogenase (Complex I) that is believed to belong to the minimal assembly required for catalysis. Complex I functions in the transfer of electrons from NADH to the respiratory chain. The immediate electron acceptor for the enzyme is believed to be ubiquinone. This chain is NADH-ubiquinone oxidoreductase chain 2, found in Chrotopterus auritus (Peters's woolly false vampire bat).